Consider the following 336-residue polypeptide: Flap endonuclease 1 (336 aa).

Residues 1 to 98 (MGVDLGDILS…GTLAARAQMK (98 aa)) are N-domain. The Mg(2+) site is built by Asp27, Asp80, Glu150, Glu152, Asp171, Asp173, and Asp234. Positions 114–255 (DSFRYAQATA…RALKLIREHG (142 aa)) are I-domain. Positions 328 to 336 (GQSTLERWL) are interaction with PCNA.

The protein belongs to the XPG/RAD2 endonuclease family. FEN1 subfamily. In terms of assembly, interacts with PCNA. PCNA stimulates the nuclease activity without altering cleavage specificity. Mg(2+) is required as a cofactor.

Functionally, structure-specific nuclease with 5'-flap endonuclease and 5'-3' exonuclease activities involved in DNA replication and repair. During DNA replication, cleaves the 5'-overhanging flap structure that is generated by displacement synthesis when DNA polymerase encounters the 5'-end of a downstream Okazaki fragment. Binds the unpaired 3'-DNA end and kinks the DNA to facilitate 5' cleavage specificity. Cleaves one nucleotide into the double-stranded DNA from the junction in flap DNA, leaving a nick for ligation. Also involved in the base excision repair (BER) pathway. Acts as a genome stabilization factor that prevents flaps from equilibrating into structures that lead to duplications and deletions. Also possesses 5'-3' exonuclease activity on nicked or gapped double-stranded DNA. In Methanothrix thermoacetophila (strain DSM 6194 / JCM 14653 / NBRC 101360 / PT) (Methanosaeta thermophila), this protein is Flap endonuclease 1.